Consider the following 34-residue polypeptide: uncharacterized protein (34 aa).

Residues 10-30 traverse the membrane as a helical segment; it reads LIITSSFFAIAVVLVLSVLLI.

Its subcellular location is the membrane. This is an uncharacterized protein from Escherichia coli O157:H7.